The primary structure comprises 303 residues: tRNA dimethylallyltransferase 1 (303 aa).

9–16 (GPTASGKT) contributes to the ATP binding site. 11-16 (TASGKT) lines the substrate pocket. Interaction with substrate tRNA regions lie at residues 34 to 37 (DSAL), 158 to 162 (QRLIR), and 239 to 244 (RCVGYR).

The protein belongs to the IPP transferase family. Monomer. Mg(2+) serves as cofactor.

The catalysed reaction is adenosine(37) in tRNA + dimethylallyl diphosphate = N(6)-dimethylallyladenosine(37) in tRNA + diphosphate. In terms of biological role, catalyzes the transfer of a dimethylallyl group onto the adenine at position 37 in tRNAs that read codons beginning with uridine, leading to the formation of N6-(dimethylallyl)adenosine (i(6)A). The chain is tRNA dimethylallyltransferase 1 from Shewanella sediminis (strain HAW-EB3).